The following is a 328-amino-acid chain: Glycerophosphodiester phosphodiesterase GDPD4 (328 aa).

A helical membrane pass occupies residues 35-55 (TILFAVIFLAIFPPLYFHFKL). In terms of domain architecture, GP-PDE spans 73 to 312 (PLVCAHGGDS…SDPSMFQGLM (240 aa)).

The protein belongs to the glycerophosphoryl diester phosphodiesterase family. As to expression, expressed in rosette and cauline leaves.

It is found in the membrane. It catalyses the reaction a sn-glycero-3-phosphodiester + H2O = an alcohol + sn-glycerol 3-phosphate + H(+). This is Glycerophosphodiester phosphodiesterase GDPD4 from Arabidopsis thaliana (Mouse-ear cress).